The primary structure comprises 167 residues: Probable D-lyxose ketol-isomerase (167 aa).

Histidine 69, histidine 71, glutamate 82, and histidine 137 together coordinate Mn(2+).

This sequence belongs to the D-lyxose ketol-isomerase family. As to quaternary structure, homodimer. It depends on Mn(2+) as a cofactor.

It carries out the reaction D-lyxose = D-xylulose. Its function is as follows. Sugar isomerase that catalyzes the reversible isomerization of D-lyxose to D-xylulose. In Bacillus subtilis (strain 168), this protein is Probable D-lyxose ketol-isomerase (ydaE).